The primary structure comprises 295 residues: UDP-N-acetylenolpyruvoylglucosamine reductase (295 aa).

The 164-residue stretch at 26 to 189 (VGGQADILFK…IEAEFKGVSS (164 aa)) folds into the FAD-binding PCMH-type domain. The active site involves arginine 169. Residue cysteine 218 is the Proton donor of the active site. Glutamate 288 is an active-site residue.

Belongs to the MurB family. It depends on FAD as a cofactor.

It localises to the cytoplasm. It carries out the reaction UDP-N-acetyl-alpha-D-muramate + NADP(+) = UDP-N-acetyl-3-O-(1-carboxyvinyl)-alpha-D-glucosamine + NADPH + H(+). It participates in cell wall biogenesis; peptidoglycan biosynthesis. In terms of biological role, cell wall formation. The polypeptide is UDP-N-acetylenolpyruvoylglucosamine reductase (Wolbachia sp. subsp. Brugia malayi (strain TRS)).